Reading from the N-terminus, the 433-residue chain is Serendipity locus protein delta (433 aa).

The ZAD domain maps to 1-90; the sequence is MDTCFFCGAV…TQKRLTTQLK (90 aa). The Zn(2+) site is built by cysteine 4, cysteine 7, cysteine 61, and cysteine 64. The segment at 141-162 is disordered; sequence DTEIKREFVDEEEEEDDDDDDE. Residues 149–162 are compositionally biased toward acidic residues; it reads VDEEEEEDDDDDDE. Positions 187–193 match the Nuclear localization signal motif; the sequence is PTKKRVK. 7 C2H2-type zinc fingers span residues 194-217, 223-245, 251-273, 279-301, 308-330, 337-359, and 405-428; these read QECTTCGKVYNSWYQLQKHISEEH, HICPICGVIRRDEEYLELHMNLH, KQCRYCPKSFSRPVNTLRHMRMH, YQCEKCGLRFSQDNLLYNHRLRH, IICSICNVSFKSRKTFNHHTLIH, HYCSVCPKSFTERYTLKMHMKTH, and GFCLICNTNFENKKELEHHLQFDH.

As to quaternary structure, homodimer (via ZAD domain) in solution. Binds DNA as a homodimer. N-terminal regions of the protein are required, in addition to the zinc fingers, for the specificity of chromatin-binding. Predominantly localized to the sub- and supraesophagal ganglia and the ventral nerve cord in the embryo, after dorsal closure.

The protein localises to the nucleus. In terms of biological role, transcriptional activator that controls bicoid gene expression during oogenesis. Found in transcriptionally active cells. Binds to specific sites on polytene chromosomes of third instar larvae. Binds to the consensus DNA sequence 5'-YTAGAGATGGRAA-3'. The chain is Serendipity locus protein delta (Sry-delta) from Drosophila melanogaster (Fruit fly).